The chain runs to 551 residues: Hydroxylamine reductase (551 aa).

[2Fe-2S] cluster contacts are provided by C3, C6, C18, and C25. Residues H249, E273, C317, C405, C433, C459, E493, and K495 each contribute to the hybrid [4Fe-2O-2S] cluster site. C405 bears the Cysteine persulfide mark.

It belongs to the HCP family. [2Fe-2S] cluster is required as a cofactor. Requires hybrid [4Fe-2O-2S] cluster as cofactor.

The protein resides in the cytoplasm. It carries out the reaction A + NH4(+) + H2O = hydroxylamine + AH2 + H(+). Its function is as follows. Catalyzes the reduction of hydroxylamine to form NH(3) and H(2)O. This chain is Hydroxylamine reductase, found in Actinobacillus pleuropneumoniae serotype 7 (strain AP76).